The sequence spans 243 residues: Ice-binding protein K1-A (243 aa).

An N-terminal signal peptide occupies residues 1–20 (MFSSTYLLAIIALAVSSVFA).

Belongs to the ice-binding protein family.

Its subcellular location is the secreted. In terms of biological role, binds to the surface of ice crystals. Inhibits growth of the ice crystals. Has antifreeze activity for survival under snow cover. Has high thermal hysteresis (TH) activity, which is the ability to lower the freezing point of an aqueous solution below its melting point, and thus the freezing of the cell fluid can be prevented protecting the organism from ice damage. The TH activity of this protein is 2.0 degrees Celsius at 0.11 mM. The sequence is that of Ice-binding protein K1-A from Typhula ishikariensis (Gray snow mold fungus).